The following is a 442-amino-acid chain: MDAWPRCLERLEAEFPPEDVHTWLKPLQAEDRGDSIVLYAPNAFIVEQVRERYLPRIRELLAYFAGNGEVALAVGSRPRAPEPLPAPQAVASAPAAAPIVPFAGNLDSHYTFANFVEGRSNQLGLAAAIQAAQKPGDRAHNPLLLYGSTGLGKTHLMFAAGNALRQANPAAKVMYLRSEQFFSAMIRALHDKAMDQFKRQFHQIDALLIDDIQFFAGMDRTQEEFFHTFNALFDGRQHIILTCDRYPREVEGLEPRLKSRLAWGLSVAIDPPDFETRAAIVLAKARERGAEIPDDVAFLIAKKMRSNVRDLEGALNTLVARANFTGRSITVEFAQETLRDLLRAQQQAIGIPNIQKTVADYYGLQMKDLLSKRRTRSLARPRQVAMALAKELTEHSLPEIGDAFAGRDHTTVLHACRQIRTLMEADGKLREDWEKLIRKLSE.

The domain I, interacts with DnaA modulators stretch occupies residues 1-75; sequence MDAWPRCLER…GNGEVALAVG (75 aa). The segment at 75–104 is domain II; that stretch reads GSRPRAPEPLPAPQAVASAPAAAPIVPFAG. The segment at 105–322 is domain III, AAA+ region; that stretch reads NLDSHYTFAN…GALNTLVARA (218 aa). Glycine 150, glycine 152, lysine 153, and threonine 154 together coordinate ATP. Residues 323 to 442 form a domain IV, binds dsDNA region; it reads NFTGRSITVE…WEKLIRKLSE (120 aa).

This sequence belongs to the DnaA family. Oligomerizes as a right-handed, spiral filament on DNA at oriC.

It localises to the cytoplasm. In terms of biological role, plays an essential role in the initiation and regulation of chromosomal replication. ATP-DnaA binds to the origin of replication (oriC) to initiate formation of the DNA replication initiation complex once per cell cycle. Binds the DnaA box (a 9 base pair repeat at the origin) and separates the double-stranded (ds)DNA. Forms a right-handed helical filament on oriC DNA; dsDNA binds to the exterior of the filament while single-stranded (ss)DNA is stabiized in the filament's interior. The ATP-DnaA-oriC complex binds and stabilizes one strand of the AT-rich DNA unwinding element (DUE), permitting loading of DNA polymerase. After initiation quickly degrades to an ADP-DnaA complex that is not apt for DNA replication. Binds acidic phospholipids. This Xanthomonas campestris pv. campestris (strain 8004) protein is Chromosomal replication initiator protein DnaA.